Reading from the N-terminus, the 381-residue chain is Lipid-A-disaccharide synthase (381 aa).

The protein belongs to the LpxB family.

It carries out the reaction a lipid X + a UDP-2-N,3-O-bis[(3R)-3-hydroxyacyl]-alpha-D-glucosamine = a lipid A disaccharide + UDP + H(+). The protein operates within bacterial outer membrane biogenesis; LPS lipid A biosynthesis. In terms of biological role, condensation of UDP-2,3-diacylglucosamine and 2,3-diacylglucosamine-1-phosphate to form lipid A disaccharide, a precursor of lipid A, a phosphorylated glycolipid that anchors the lipopolysaccharide to the outer membrane of the cell. This is Lipid-A-disaccharide synthase from Solibacter usitatus (strain Ellin6076).